The chain runs to 445 residues: Phosphoglucosamine mutase 1 (445 aa).

Catalysis depends on Ser102, which acts as the Phosphoserine intermediate. Ser102, Asp241, Asp243, and Asp245 together coordinate Mg(2+). Ser102 is subject to Phosphoserine.

Belongs to the phosphohexose mutase family. It depends on Mg(2+) as a cofactor. Post-translationally, activated by phosphorylation.

It catalyses the reaction alpha-D-glucosamine 1-phosphate = D-glucosamine 6-phosphate. In terms of biological role, catalyzes the conversion of glucosamine-6-phosphate to glucosamine-1-phosphate. The polypeptide is Phosphoglucosamine mutase 1 (Shewanella baltica (strain OS185)).